A 378-amino-acid chain; its full sequence is Queuine tRNA-ribosyltransferase (378 aa).

The Proton acceptor role is filled by Asp89. Substrate-binding positions include Asp89–Phe93, Asp143, Gln187, and Gly214. The interval Gly245–Asp251 is RNA binding. The active-site Nucleophile is the Asp264. The RNA binding; important for wobble base 34 recognition stretch occupies residues Thr269–Arg273. Cys302, Cys304, Cys307, and His334 together coordinate Zn(2+).

It belongs to the queuine tRNA-ribosyltransferase family. In terms of assembly, homodimer. Within each dimer, one monomer is responsible for RNA recognition and catalysis, while the other monomer binds to the replacement base PreQ1. Zn(2+) serves as cofactor.

The catalysed reaction is 7-aminomethyl-7-carbaguanine + guanosine(34) in tRNA = 7-aminomethyl-7-carbaguanosine(34) in tRNA + guanine. It functions in the pathway tRNA modification; tRNA-queuosine biosynthesis. Catalyzes the base-exchange of a guanine (G) residue with the queuine precursor 7-aminomethyl-7-deazaguanine (PreQ1) at position 34 (anticodon wobble position) in tRNAs with GU(N) anticodons (tRNA-Asp, -Asn, -His and -Tyr). Catalysis occurs through a double-displacement mechanism. The nucleophile active site attacks the C1' of nucleotide 34 to detach the guanine base from the RNA, forming a covalent enzyme-RNA intermediate. The proton acceptor active site deprotonates the incoming PreQ1, allowing a nucleophilic attack on the C1' of the ribose to form the product. After dissociation, two additional enzymatic reactions on the tRNA convert PreQ1 to queuine (Q), resulting in the hypermodified nucleoside queuosine (7-(((4,5-cis-dihydroxy-2-cyclopenten-1-yl)amino)methyl)-7-deazaguanosine). In Blochmanniella floridana, this protein is Queuine tRNA-ribosyltransferase.